The following is an 82-amino-acid chain: Large ribosomal subunit protein bL31B-2 (82 aa).

It belongs to the bacterial ribosomal protein bL31 family. Type B subfamily. As to quaternary structure, part of the 50S ribosomal subunit.

This Streptomyces avermitilis (strain ATCC 31267 / DSM 46492 / JCM 5070 / NBRC 14893 / NCIMB 12804 / NRRL 8165 / MA-4680) protein is Large ribosomal subunit protein bL31B-2.